Reading from the N-terminus, the 270-residue chain is 4-hydroxy-tetrahydrodipicolinate reductase (270 aa).

NAD(+) contacts are provided by residues 8–13, D34, 102–104, and 128–131; these read GALGRM, GTT, and SQNY. Residue H160 is the Proton donor/acceptor of the active site. Residue H161 participates in (S)-2,3,4,5-tetrahydrodipicolinate binding. K164 acts as the Proton donor in catalysis. 170–171 contacts (S)-2,3,4,5-tetrahydrodipicolinate; sequence GT.

Belongs to the DapB family.

Its subcellular location is the cytoplasm. The enzyme catalyses (S)-2,3,4,5-tetrahydrodipicolinate + NAD(+) + H2O = (2S,4S)-4-hydroxy-2,3,4,5-tetrahydrodipicolinate + NADH + H(+). It carries out the reaction (S)-2,3,4,5-tetrahydrodipicolinate + NADP(+) + H2O = (2S,4S)-4-hydroxy-2,3,4,5-tetrahydrodipicolinate + NADPH + H(+). It participates in amino-acid biosynthesis; L-lysine biosynthesis via DAP pathway; (S)-tetrahydrodipicolinate from L-aspartate: step 4/4. In terms of biological role, catalyzes the conversion of 4-hydroxy-tetrahydrodipicolinate (HTPA) to tetrahydrodipicolinate. The chain is 4-hydroxy-tetrahydrodipicolinate reductase from Methanococcus maripaludis (strain C7 / ATCC BAA-1331).